The following is a 100-amino-acid chain: MIGKQATLRDIVLEELVQPIDLHCHEELPDLPEDIEASVVEEEPAYTPYKIIVLCGGCEVRLKLYVWATDAGIRNLQDCLLGDVRLLCPTCREDIRNGGR.

The segment at 1-43 is E7 terminal domain; the sequence is MIGKQATLRDIVLEELVQPIDLHCHEELPDLPEDIEASVVEEE. Positions 22 to 26 match the LXCXE motif; interaction with host RB1 and TMEM173/STING motif; sequence LHCHE. A zinc finger lies at 55–91; that stretch reads CGGCEVRLKLYVWATDAGIRNLQDCLLGDVRLLCPTC. Positions 73–81 match the Nuclear export signal motif; it reads IRNLQDCLL.

This sequence belongs to the papillomaviridae E7 protein family. As to quaternary structure, homodimer. Homooligomer. Interacts with host RB1; this interaction induces dissociation of RB1-E2F1 complex thereby disrupting RB1 activity. Interacts with host EP300; this interaction represses EP300 transcriptional activity. Interacts with protein E2; this interaction inhibits E7 oncogenic activity. Interacts with host TMEM173/STING; this interaction impairs the ability of TMEM173/STING to sense cytosolic DNA and promote the production of type I interferon (IFN-alpha and IFN-beta). In terms of processing, highly phosphorylated.

Its subcellular location is the host cytoplasm. It is found in the host nucleus. In terms of biological role, plays a role in viral genome replication by driving entry of quiescent cells into the cell cycle. Stimulation of progression from G1 to S phase allows the virus to efficiently use the cellular DNA replicating machinery to achieve viral genome replication. E7 protein has both transforming and trans-activating activities. Induces the disassembly of the E2F1 transcription factor from RB1, with subsequent transcriptional activation of E2F1-regulated S-phase genes. Interferes with host histone deacetylation mediated by HDAC1 and HDAC2, leading to transcription activation. Also plays a role in the inhibition of both antiviral and antiproliferative functions of host interferon alpha. Interaction with host TMEM173/STING impairs the ability of TMEM173/STING to sense cytosolic DNA and promote the production of type I interferon (IFN-alpha and IFN-beta). The sequence is that of Protein E7 from Homo sapiens (Human).